The chain runs to 173 residues: Alpha-crystallin A chain (173 aa).

Met1 is modified (N-acetylmethionine). The required for complex formation with BFSP1 and BFSP2 stretch occupies residues 1 to 63; it reads MDVTIQHPWF…RTVLDSGISE (63 aa). Deamidated glutamine; partial is present on Gln6. At Ser45 the chain carries Phosphoserine. At Gln50 the chain carries Deamidated glutamine; partial. Positions 52–162 constitute a sHSP domain; that stretch reads LFRTVLDSGI…GHSERAIPVS (111 aa). At Lys99 the chain carries N6-acetyllysine. Residue His100 participates in Zn(2+) binding. Asn101 bears the Deamidated asparagine; partial mark. Glu102 and His107 together coordinate Zn(2+). Ser122 carries the post-translational modification Phosphoserine. Asn123 bears the Deamidated asparagine; partial mark. A disulfide bond links Cys131 and Cys142. The disordered stretch occupies residues 146–173; it reads VQSSMDDGHSERAIPVSREEKPSSVPSS. Gln147 carries the deamidated glutamine; partial modification. Over residues 151–167 the composition is skewed to basic and acidic residues; that stretch reads DDGHSERAIPVSREEKP. His154 contributes to the Zn(2+) binding site. A glycan (O-linked (GlcNAc) serine) is linked at Ser162.

It belongs to the small heat shock protein (HSP20) family. Heteromer composed of three CRYAA and one CRYAB subunits. Inter-subunit bridging via zinc ions enhances stability, which is crucial as there is no protein turn over in the lens. Can also form homodimers and homotetramers (dimers of dimers) which serve as the building blocks of homooligomers. Within homooligomers, the zinc-binding motif is created from residues of 3 different molecules. His-100 and Glu-102 from one molecule are ligands of the zinc ion, and His-107 and His-154 residues from additional molecules complete the site with tetrahedral coordination geometry. Part of a complex required for lens intermediate filament formation composed of BFSP1, BFSP2 and CRYAA. Post-translationally, undergoes age-dependent proteolytical cleavage at the C-terminus.

It is found in the cytoplasm. The protein resides in the nucleus. In terms of biological role, contributes to the transparency and refractive index of the lens. In its oxidized form (absence of intramolecular disulfide bond), acts as a chaperone, preventing aggregation of various proteins under a wide range of stress conditions. Required for the correct formation of lens intermediate filaments as part of a complex composed of BFSP1, BFSP2 and CRYAA. The protein is Alpha-crystallin A chain (CRYAA) of Orycteropus afer (Aardvark).